The sequence spans 138 residues: Large ribosomal subunit protein uL16 (138 aa).

Over residues 1 to 16 the composition is skewed to basic residues; that stretch reads MLIPRRVKHRKQHHPG. The disordered stretch occupies residues 1–24; that stretch reads MLIPRRVKHRKQHHPGRSGAATGG.

Belongs to the universal ribosomal protein uL16 family. In terms of assembly, part of the 50S ribosomal subunit.

In terms of biological role, binds 23S rRNA and is also seen to make contacts with the A and possibly P site tRNAs. The chain is Large ribosomal subunit protein uL16 from Paenarthrobacter aurescens (strain TC1).